The following is a 361-amino-acid chain: Phospho-N-acetylmuramoyl-pentapeptide-transferase (361 aa).

A run of 10 helical transmembrane segments spans residues 28-48 (LAII…IKFL), 74-94 (TMGG…LADL), 99-119 (TWIT…DDYA), 133-153 (SKLL…EYLD), 168-188 (LSLD…VGSS), 203-223 (VPIA…GNLI), 236-256 (TGEL…FLWF), 263-283 (VFMG…ISVI), 288-308 (IVLA…ILQV), and 338-358 (KVVI…LSSL).

This sequence belongs to the glycosyltransferase 4 family. MraY subfamily. The cofactor is Mg(2+).

The protein localises to the cell inner membrane. The enzyme catalyses UDP-N-acetyl-alpha-D-muramoyl-L-alanyl-gamma-D-glutamyl-meso-2,6-diaminopimeloyl-D-alanyl-D-alanine + di-trans,octa-cis-undecaprenyl phosphate = di-trans,octa-cis-undecaprenyl diphospho-N-acetyl-alpha-D-muramoyl-L-alanyl-D-glutamyl-meso-2,6-diaminopimeloyl-D-alanyl-D-alanine + UMP. Its pathway is cell wall biogenesis; peptidoglycan biosynthesis. Catalyzes the initial step of the lipid cycle reactions in the biosynthesis of the cell wall peptidoglycan: transfers peptidoglycan precursor phospho-MurNAc-pentapeptide from UDP-MurNAc-pentapeptide onto the lipid carrier undecaprenyl phosphate, yielding undecaprenyl-pyrophosphoryl-MurNAc-pentapeptide, known as lipid I. This Rickettsia massiliae (strain Mtu5) protein is Phospho-N-acetylmuramoyl-pentapeptide-transferase.